A 248-amino-acid chain; its full sequence is 5'-nucleotidase SurE (248 aa).

4 residues coordinate a divalent metal cation: Asp8, Asp9, Ser39, and Asn91.

The protein belongs to the SurE nucleotidase family. A divalent metal cation serves as cofactor.

The protein resides in the cytoplasm. The enzyme catalyses a ribonucleoside 5'-phosphate + H2O = a ribonucleoside + phosphate. In terms of biological role, nucleotidase that shows phosphatase activity on nucleoside 5'-monophosphates. This chain is 5'-nucleotidase SurE, found in Neisseria meningitidis serogroup A / serotype 4A (strain DSM 15465 / Z2491).